An 86-amino-acid polypeptide reads, in one-letter code: MKTVILVVIALMVIEVQGDGYLMVRAGIEKGCKIWCVINNDYCNRDCKLKGGTYGYCYFWKLACYCEGLPESSPDIWTYEKNTCSP.

The first 18 residues, 1 to 18 (MKTVILVVIALMVIEVQG), serve as a signal peptide directing secretion. The LCN-type CS-alpha/beta domain maps to 19–85 (DGYLMVRAGI…IWTYEKNTCS (67 aa)). Cystine bridges form between Cys-32/Cys-84, Cys-36/Cys-57, Cys-43/Cys-64, and Cys-47/Cys-66.

It belongs to the long (4 C-C) scorpion toxin superfamily. Sodium channel inhibitor family. Beta subfamily. As to expression, expressed by the venom gland.

Its subcellular location is the secreted. Binds voltage-independently at site-4 of sodium channels (Nav) and shift the voltage of activation toward more negative potentials thereby affecting sodium channel activation and promoting spontaneous and repetitive firing. The protein is Neurotoxin LmNaTx34.1 of Lychas mucronatus (Chinese swimming scorpion).